A 447-amino-acid polypeptide reads, in one-letter code: Phosphoglucosamine mutase (447 aa).

S103 functions as the Phosphoserine intermediate in the catalytic mechanism. S103, D242, D244, and D246 together coordinate Mg(2+). S103 carries the post-translational modification Phosphoserine.

The protein belongs to the phosphohexose mutase family. It depends on Mg(2+) as a cofactor. Post-translationally, activated by phosphorylation.

It catalyses the reaction alpha-D-glucosamine 1-phosphate = D-glucosamine 6-phosphate. Its function is as follows. Catalyzes the conversion of glucosamine-6-phosphate to glucosamine-1-phosphate. The sequence is that of Phosphoglucosamine mutase from Jannaschia sp. (strain CCS1).